We begin with the raw amino-acid sequence, 146 residues long: Late protein H7 (146 aa).

The chain crosses the membrane as a helical span at residues 10-32 (LAMTAFFGELNTLDIMALIMSIF).

Belongs to the chordopoxvirinae H7 family.

It localises to the membrane. Contributes to the formation of crescents and immature virions (IV). The sequence is that of Late protein H7 from Vaccinia virus (strain Tian Tan) (VACV).